The chain runs to 225 residues: UPF0758 protein Vapar_4033 (225 aa).

The region spanning 103–225 is the MPN domain; it reads VFDSPGTVKQ…SYSMAEKGLL (123 aa). Residues histidine 174, histidine 176, and aspartate 187 each coordinate Zn(2+). A JAMM motif motif is present at residues 174–187; sequence HNHPSGSIEPSRAD.

This sequence belongs to the UPF0758 family.

This Variovorax paradoxus (strain S110) protein is UPF0758 protein Vapar_4033.